Here is a 220-residue protein sequence, read N- to C-terminus: Glutathione S-transferase-like protein FUS3 (220 aa).

Residues 3–84 (SFGTLYTYMP…YVAQSGPQAS (82 aa)) enclose the GST N-terminal domain. The region spanning 90–220 (DAMSSAKIRQ…LIEKRRIGAK (131 aa)) is the GST C-terminal domain.

Belongs to the GST superfamily.

Functionally, glutathione S-transferase-like protein; part of the gene cluster that mediates the biosynthesis of the mycotoxin fusarin C. Within the cluster, FUS1, FUS2, FUS8 and FUS9 are sufficient for fusarin production. The other FUS cluster members are not essential for fusarin C biosynthesis. The sequence is that of Glutathione S-transferase-like protein FUS3 from Gibberella moniliformis (strain M3125 / FGSC 7600) (Maize ear and stalk rot fungus).